We begin with the raw amino-acid sequence, 361 residues long: 3-dehydroquinate synthase (361 aa).

Residues D70 to K75, G104 to D108, T128 to T129, K141, and K150 contribute to the NAD(+) site. Positions 183, 246, and 263 each coordinate Zn(2+).

It belongs to the sugar phosphate cyclases superfamily. Dehydroquinate synthase family. The cofactor is Co(2+). Zn(2+) is required as a cofactor. It depends on NAD(+) as a cofactor.

The protein resides in the cytoplasm. It catalyses the reaction 7-phospho-2-dehydro-3-deoxy-D-arabino-heptonate = 3-dehydroquinate + phosphate. Its pathway is metabolic intermediate biosynthesis; chorismate biosynthesis; chorismate from D-erythrose 4-phosphate and phosphoenolpyruvate: step 2/7. Functionally, catalyzes the conversion of 3-deoxy-D-arabino-heptulosonate 7-phosphate (DAHP) to dehydroquinate (DHQ). The chain is 3-dehydroquinate synthase from Teredinibacter turnerae (strain ATCC 39867 / T7901).